The sequence spans 759 residues: MSAPKKRKSDIHSDDRDHADHQTKKEKHWFEEKSEQNGENRRSSIFKGFLKKVKSSTTLKSTNKSASSSKMDTIANETHLSITSESSITSVESCHSAQFPNVAKNAMLRTLVNRDSFTPVPPPDGESVTFILPEIGSSKLEFTSKMDDAISIESRMSIGSCHTIDEDSASIGSTSVFCTPSRNPLMRNGLRMSTRSVPENQDDMPPALFRSLCNSAVRRVPTSKSEGGGTPMRRSMRMSIQKRNLSSKNMEDVPEEEALTVSNSSIRVDAPIAEEDEEVFGAAKEYFDNNVTSHNDSADEGTCSMSRLSTTSERASGVGGSSIFQGRRSSIFRKIFPGKSESKDRRMSDNNQASEQYMDKKSRRASVVSFNEFTSVSGLSVNDSASKNPKDLTESPQQPKLRKKTASSSNLSQRISSVFRMGSNSTVKLNEYVPSPIVSQSSRRNTLTGNSSISSGVGSIASGTSDQGYGTIGSRSGQSISRCGSRRDDEGKKERTRRLLDRIIISDVPAGELLKLKIEQVKKQKQLEMDELFETQLTESSSSDTSQSENLQFDVVAVDIKADGSPFSTTAATFMDSELSKRVKEEIVSNYRPDRCGSITEYEPELVFVMPEQPQASLKSLNDSVSSNADINLDHLRNVRSGLCKSIEEWKRITKMRESSTMLIYPMFCQSEEEWDSKGTIDAIFLMLDGILMNTKRWMPNGKCILAGVTPNNVILLRNKFDELKLSVAISESDGPASSNDDFDTQSTASTSTVFGAKI.

Disordered regions lie at residues 1 to 46, 334 to 361, 379 to 413, 440 to 495, and 732 to 759; these read MSAP…SSIF, KIFPGKSESKDRRMSDNNQASEQYMDKK, LSVNDSASKNPKDLTESPQQPKLRKKTASSSNLSQ, QSSR…KKER, and ESDGPASSNDDFDTQSTASTSTVFGAKI. Positions 10–42 are enriched in basic and acidic residues; that stretch reads DIHSDDRDHADHQTKKEKHWFEEKSEQNGENRR. The segment covering 448–465 has biased composition (low complexity); sequence TGNSSISSGVGSIASGTS. Over residues 473–482 the composition is skewed to polar residues; it reads GSRSGQSISR. The segment covering 485–495 has biased composition (basic and acidic residues); that stretch reads SRRDDEGKKER. Polar residues predominate over residues 736 to 759; it reads PASSNDDFDTQSTASTSTVFGAKI.

The protein localises to the nucleus. It is found in the cytoplasm. The protein resides in the cell cortex. It localises to the cleavage furrow. Its function is as follows. Required for formation of the pseudocleavage furrow during the first cleavage of the embryo and also mediates aster-induced furrowing during cytokinesis. Promotes cortical recruitment of ani-1 and nmy-2 during pseudocleavage and cytokinesis and promotes the accumulation of actin at furrowing regions. Regulates establishment of embryonic cell polarity. This Caenorhabditis elegans protein is Pseudocleavage protein nop-1 (nop-1).